Reading from the N-terminus, the 361-residue chain is Putative F-box protein At1g33010 (361 aa).

The F-box domain maps to 4 to 50; sequence GNTLDSIPTDLILEIFSRLSAKSVGRLRCLSKLWRKGEWFFFSSLQP. Positions 308–339 are disordered; it reads SIRPTEQKHKPTSTETSMSRKDHQVRTIDQPQ.

This chain is Putative F-box protein At1g33010, found in Arabidopsis thaliana (Mouse-ear cress).